A 625-amino-acid chain; its full sequence is tRNA uridine 5-carboxymethylaminomethyl modification enzyme MnmG (625 aa).

Residues 10–15 (GGGHAG), Val122, and Ser177 each bind FAD. Residue 271–285 (GPRYCPSIEDKVNRF) coordinates NAD(+). Gln368 is a binding site for FAD.

Belongs to the MnmG family. As to quaternary structure, homodimer. Heterotetramer of two MnmE and two MnmG subunits. The cofactor is FAD.

The protein resides in the cytoplasm. Its function is as follows. NAD-binding protein involved in the addition of a carboxymethylaminomethyl (cmnm) group at the wobble position (U34) of certain tRNAs, forming tRNA-cmnm(5)s(2)U34. The protein is tRNA uridine 5-carboxymethylaminomethyl modification enzyme MnmG of Wolinella succinogenes (strain ATCC 29543 / DSM 1740 / CCUG 13145 / JCM 31913 / LMG 7466 / NCTC 11488 / FDC 602W) (Vibrio succinogenes).